Reading from the N-terminus, the 117-residue chain is Small ribosomal subunit protein eS25 (117 aa).

The interval Met-1–Lys-38 is disordered. Residues Lys-28–Gly-37 show a composition bias toward basic residues.

Belongs to the eukaryotic ribosomal protein eS25 family.

This is Small ribosomal subunit protein eS25 (RpS25) from Drosophila melanogaster (Fruit fly).